Here is a 351-residue protein sequence, read N- to C-terminus: MEKKQLKFIDLFAGIGGMRIPFEELGGKCVFSSEIDKHCQRTYEANFGEMPTGDITKLSADSIPYHDLLLAGFPCQAFSQGGRKQGFQDERGQLFFQVAKILNDHRPQAILLENVKGLRGHDKGRTLQMILYVLEKLNYVVSWKIISATDFNLPQKRERIFIVGFQDKNNKNLIFDFPKPIELTAKVGDLLEKEVDEKYTITDRMWEGHQNRKKAHRKRGNGFGFSLVNRNSSYTRTISARYYKDGSEVLVEQANKNPRVLTPRECARLQGFPESFVIPVSDCQAWRQFGNSVPVSVIRAIAQKMLSYIDLTEQQKEFKKVDLDQVITQKKKQLYPEDYQEQFIQKELALL.

An SAM-dependent MTase C5-type domain is found at 6–312; the sequence is LKFIDLFAGI…QKMLSYIDLT (307 aa). Cys75 is a catalytic residue.

It belongs to the class I-like SAM-binding methyltransferase superfamily. C5-methyltransferase family.

It carries out the reaction a 2'-deoxycytidine in DNA + S-adenosyl-L-methionine = a 5-methyl-2'-deoxycytidine in DNA + S-adenosyl-L-homocysteine + H(+). Its function is as follows. A methylase, recognizes the double-stranded sequence 5'-CCNGG-3', methylates C-2 on both strands, and protects the DNA from cleavage by the DsaV endonuclease. In Dactylococcopsis salina (Myxobaktron salinum), this protein is Type II methyltransferase M.DsaV.